The following is a 196-amino-acid chain: Holliday junction branch migration complex subunit RuvA (196 aa).

The domain I stretch occupies residues 1–62 (MYEYINGLIT…ENDISLYGFI (62 aa)). The interval 63–141 (DADEKALFNK…ELASKTGMVD (79 aa)) is domain II. Residues 142–148 (SSSNPEQ) form a flexible linker region. Residues 148 to 196 (QSQALDDALEALLALGYTAKDVKAVAQIIGRNSDTTDGYIRSALKLLVK) are domain III.

The protein belongs to the RuvA family. In terms of assembly, homotetramer. Forms an RuvA(8)-RuvB(12)-Holliday junction (HJ) complex. HJ DNA is sandwiched between 2 RuvA tetramers; dsDNA enters through RuvA and exits via RuvB. An RuvB hexamer assembles on each DNA strand where it exits the tetramer. Each RuvB hexamer is contacted by two RuvA subunits (via domain III) on 2 adjacent RuvB subunits; this complex drives branch migration. In the full resolvosome a probable DNA-RuvA(4)-RuvB(12)-RuvC(2) complex forms which resolves the HJ.

The protein localises to the cytoplasm. Functionally, the RuvA-RuvB-RuvC complex processes Holliday junction (HJ) DNA during genetic recombination and DNA repair, while the RuvA-RuvB complex plays an important role in the rescue of blocked DNA replication forks via replication fork reversal (RFR). RuvA specifically binds to HJ cruciform DNA, conferring on it an open structure. The RuvB hexamer acts as an ATP-dependent pump, pulling dsDNA into and through the RuvAB complex. HJ branch migration allows RuvC to scan DNA until it finds its consensus sequence, where it cleaves and resolves the cruciform DNA. The protein is Holliday junction branch migration complex subunit RuvA of Leuconostoc mesenteroides subsp. mesenteroides (strain ATCC 8293 / DSM 20343 / BCRC 11652 / CCM 1803 / JCM 6124 / NCDO 523 / NBRC 100496 / NCIMB 8023 / NCTC 12954 / NRRL B-1118 / 37Y).